The following is a 102-amino-acid chain: Co-chaperonin GroES (102 aa).

The protein belongs to the GroES chaperonin family. In terms of assembly, heptamer of 7 subunits arranged in a ring. Interacts with the chaperonin GroEL.

Its subcellular location is the cytoplasm. Together with the chaperonin GroEL, plays an essential role in assisting protein folding. The GroEL-GroES system forms a nano-cage that allows encapsulation of the non-native substrate proteins and provides a physical environment optimized to promote and accelerate protein folding. GroES binds to the apical surface of the GroEL ring, thereby capping the opening of the GroEL channel. The polypeptide is Co-chaperonin GroES (Streptomyces coelicolor (strain ATCC BAA-471 / A3(2) / M145)).